The chain runs to 498 residues: UDP-N-acetylmuramoylalanine--D-glutamate ligase (498 aa).

ATP is bound at residue 119–125 (GTNGKST).

It belongs to the MurCDEF family.

It localises to the cytoplasm. The catalysed reaction is UDP-N-acetyl-alpha-D-muramoyl-L-alanine + D-glutamate + ATP = UDP-N-acetyl-alpha-D-muramoyl-L-alanyl-D-glutamate + ADP + phosphate + H(+). The protein operates within cell wall biogenesis; peptidoglycan biosynthesis. Its function is as follows. Cell wall formation. Catalyzes the addition of glutamate to the nucleotide precursor UDP-N-acetylmuramoyl-L-alanine (UMA). The chain is UDP-N-acetylmuramoylalanine--D-glutamate ligase from Wolbachia sp. subsp. Brugia malayi (strain TRS).